A 1405-amino-acid chain; its full sequence is Sterol 3-beta-glucosyltransferase (1405 aa).

2 stretches are compositionally biased toward basic and acidic residues: residues 1 to 16 (MRPF…DRKL) and 95 to 105 (TGQRPRKESSV). Disordered stretches follow at residues 1-27 (MRPF…SASR), 83-186 (ARFD…SATP), and 203-230 (DLKA…ASVS). The segment covering 106-115 (RKGTSVSVNT) has biased composition (polar residues). Over residues 116 to 126 (SSLDPSQRSSS) the composition is skewed to low complexity. Polar residues predominate over residues 206–218 (ASSTERSQSSLNE). Positions 246-285 (EKVLVEYACSLLQSMLLQGYMYVTEGHICFYAYLPKKSTV) constitute a GRAM 1 domain. Residues 285-384 (VAIKSGYLHK…WVKALQKVIF (100 aa)) enclose the PH domain. Disordered stretches follow at residues 461–526 (SQHL…DSSD) and 566–642 (TIYG…SGAP). Polar residues predominate over residues 483–493 (RWSLTSGTSRA). Basic and acidic residues predominate over residues 570–589 (LDRRPSGRERRGRRNSDETA). Over residues 590–603 (RSPSTRVNVGTGQQ) the composition is skewed to polar residues. A compositionally biased stretch (basic and acidic residues) spans 606–624 (ELDRRTDGNTSGREARDTT). Residues 626 to 642 (ESDQYTQDPTKSFSGAP) are compositionally biased toward polar residues. A GRAM 2 domain is found at 724–790 (DRFRAHFALP…RDIENVEKEK (67 aa)). Residues serine 911, arginine 912, aspartate 914, alanine 1214, histidine 1216, histidine 1229, glycine 1233, threonine 1234, aspartate 1253, and glutamine 1254 each coordinate UDP-alpha-D-glucose. The disordered stretch occupies residues 1330–1367 (SIASSTPFSPTPSAKTAAEQDADDDVEDSEEWTFVGDD). Positions 1332–1348 (ASSTPFSPTPSAKTAAE) are enriched in low complexity. Residues 1349–1367 (QDADDDVEDSEEWTFVGDD) show a composition bias toward acidic residues.

Belongs to the glycosyltransferase 28 family.

It is found in the cytoplasm. It localises to the preautophagosomal structure membrane. The catalysed reaction is a sterol + UDP-alpha-D-glucose = a sterol 3-beta-D-glucoside + UDP + H(+). It carries out the reaction ergosterol + UDP-alpha-D-glucose = ergosteryl 3-beta-D-glucoside + UDP + H(+). In terms of biological role, sterol glycosyltransferase responsible for the glycosylation of ergosterol to form ergosterol-glucoside. The protein is Sterol 3-beta-glucosyltransferase of Aspergillus fumigatus (strain ATCC MYA-4609 / CBS 101355 / FGSC A1100 / Af293) (Neosartorya fumigata).